We begin with the raw amino-acid sequence, 272 residues long: MPELPEVETCKKGLRPLLCQKTITAVDVRAARLREPLDAIALSQLIHCQITEITRRAKYLIININREDIAVLVHLGMSGSLRVLPQTEPIKKHDHIIITLNDGYSLRYHDPRRFGLFTVFHAQKPHRLLQHLGIEPLDDSCTGDVLHQHCQKRKIKINSLIMNQNIIVGIGNIYATEALFLSGIRPDRPAQTLSAAECASLMAQIKTLLTAAIARGGTTLRDFSAPDGHAGYFQQQLHVYGKSGQHCPKCGNILEDLKISNRGTVYCPHCQR.

The Schiff-base intermediate with DNA role is filled by Pro-2. The Proton donor role is filled by Glu-3. The Proton donor; for beta-elimination activity role is filled by Lys-58. 3 residues coordinate DNA: His-93, Arg-112, and Arg-153. An FPG-type zinc finger spans residues 238–272 (HVYGKSGQHCPKCGNILEDLKISNRGTVYCPHCQR). Arg-262 serves as the catalytic Proton donor; for delta-elimination activity.

It belongs to the FPG family. As to quaternary structure, monomer. Zn(2+) serves as cofactor.

It catalyses the reaction Hydrolysis of DNA containing ring-opened 7-methylguanine residues, releasing 2,6-diamino-4-hydroxy-5-(N-methyl)formamidopyrimidine.. The catalysed reaction is 2'-deoxyribonucleotide-(2'-deoxyribose 5'-phosphate)-2'-deoxyribonucleotide-DNA = a 3'-end 2'-deoxyribonucleotide-(2,3-dehydro-2,3-deoxyribose 5'-phosphate)-DNA + a 5'-end 5'-phospho-2'-deoxyribonucleoside-DNA + H(+). In terms of biological role, involved in base excision repair of DNA damaged by oxidation or by mutagenic agents. Acts as a DNA glycosylase that recognizes and removes damaged bases. Has a preference for oxidized purines, such as 7,8-dihydro-8-oxoguanine (8-oxoG). Has AP (apurinic/apyrimidinic) lyase activity and introduces nicks in the DNA strand. Cleaves the DNA backbone by beta-delta elimination to generate a single-strand break at the site of the removed base with both 3'- and 5'-phosphates. The protein is Formamidopyrimidine-DNA glycosylase of Dichelobacter nodosus (strain VCS1703A).